The chain runs to 401 residues: Imidazolonepropionase (401 aa).

Histidine 70 and histidine 72 together coordinate Fe(3+). Positions 70 and 72 each coordinate Zn(2+). Arginine 79, tyrosine 142, and histidine 175 together coordinate 4-imidazolone-5-propanoate. Residue tyrosine 142 participates in N-formimidoyl-L-glutamate binding. Histidine 238 contacts Fe(3+). Histidine 238 is a binding site for Zn(2+). Glutamine 241 is a binding site for 4-imidazolone-5-propanoate. Fe(3+) is bound at residue aspartate 313. Aspartate 313 provides a ligand contact to Zn(2+). Residues asparagine 315 and glycine 317 each coordinate N-formimidoyl-L-glutamate. Threonine 318 serves as a coordination point for 4-imidazolone-5-propanoate.

It belongs to the metallo-dependent hydrolases superfamily. HutI family. Zn(2+) is required as a cofactor. It depends on Fe(3+) as a cofactor.

Its subcellular location is the cytoplasm. It carries out the reaction 4-imidazolone-5-propanoate + H2O = N-formimidoyl-L-glutamate. Its pathway is amino-acid degradation; L-histidine degradation into L-glutamate; N-formimidoyl-L-glutamate from L-histidine: step 3/3. In terms of biological role, catalyzes the hydrolytic cleavage of the carbon-nitrogen bond in imidazolone-5-propanoate to yield N-formimidoyl-L-glutamate. It is the third step in the universal histidine degradation pathway. The polypeptide is Imidazolonepropionase (Xanthomonas euvesicatoria pv. vesicatoria (strain 85-10) (Xanthomonas campestris pv. vesicatoria)).